The following is a 39-amino-acid chain: Photosystem II reaction center protein Y (39 aa).

The helical transmembrane segment at 5 to 23 (VLVVVGPLLIAASWAVFNI) threads the bilayer.

The protein belongs to the PsbY family. In terms of assembly, PSII is composed of 1 copy each of membrane proteins PsbA, PsbB, PsbC, PsbD, PsbE, PsbF, PsbH, PsbI, PsbJ, PsbK, PsbL, PsbM, PsbT, PsbX, PsbY, PsbZ, Psb30/Ycf12, peripheral proteins PsbO, CyanoQ (PsbQ), PsbU, PsbV and a large number of cofactors. It forms dimeric complexes.

Its subcellular location is the cellular thylakoid membrane. In terms of biological role, loosely associated component of the core of photosystem II (PSII), it is not always seen in crystals. PSII is a light-driven water plastoquinone oxidoreductase, using light energy to abstract electrons from H(2)O, generating a proton gradient subsequently used for ATP formation. This is Photosystem II reaction center protein Y from Rippkaea orientalis (strain PCC 8801 / RF-1) (Cyanothece sp. (strain PCC 8801)).